A 625-amino-acid chain; its full sequence is Clathrin interactor 1 (625 aa).

Residues 16 to 149 form the ENTH domain; that stretch reads NVVMNYSEIE…QDDDRLREER (134 aa). Arg-29 is an a 1,2-diacyl-sn-glycero-3-phospho-(1D-myo-inositol-4,5-bisphosphate) binding site. The tract at residues 52–54 is interaction with VTI1B; it reads FMY. Arg-67 provides a ligand contact to a 1,2-diacyl-sn-glycero-3-phospho-(1D-myo-inositol-4,5-bisphosphate). Interaction with VTI1B stretches follow at residues 94 to 96 and 142 to 153; these read SER and DDRLREERKKAK. Residues Ser-163, Ser-166, Ser-173, Ser-205, Ser-210, Ser-227, Ser-245, and Ser-299 each carry the phosphoserine modification. Positions 219–331 are disordered; that stretch reads FRRKDREDSP…SSGDLVDLFD (113 aa). Basic and acidic residues predominate over residues 222-239; that stretch reads KDREDSPERCSDSDEEKK. At Thr-308 the chain carries Phosphothreonine. Positions 308–323 are enriched in low complexity; the sequence is TPQSSVKTSVPSSKSS. At Ser-312 the chain carries Phosphoserine. The segment at 340–352 is interaction with AP1G1, AP1G2 and GGA2; the sequence is SADLFGGFADFGS. Positions 368-380 are interaction with AP1G1 and AP1G2; sequence GNGDFGDWSAFNQ. At Ser-624 the chain carries Phosphoserine.

Belongs to the epsin family. Binds clathrin heavy chain and AP-2. Interacts with VTI1B. Interacts with GGA2 (via GAE domain). Interacts with AP1G1 (via GAE domain). Interacts with AP1G2 (via GAE domain). In terms of tissue distribution, ubiquitously expressed at low to intermediate levels.

The protein localises to the cytoplasm. It is found in the perinuclear region. It localises to the membrane. The protein resides in the cytoplasmic vesicle. Its subcellular location is the clathrin-coated vesicle. Binds to membranes enriched in phosphatidylinositol 4,5-bisphosphate (PtdIns(4,5)P2). May have a role in transport via clathrin-coated vesicles from the trans-Golgi network to endosomes. Stimulates clathrin assembly. The chain is Clathrin interactor 1 (CLINT1) from Homo sapiens (Human).